Here is a 146-residue protein sequence, read N- to C-terminus: Hemoglobin subunit beta (146 aa).

Residue Val-1 is modified to N-acetylvaline. The Globin domain maps to 2-146 (HLTGEEKSLV…VANALAHKYH (145 aa)). At Thr-12 the chain carries Phosphothreonine. Ser-44 carries the phosphoserine modification. N6-acetyllysine is present on Lys-59. His-63 contacts heme b. Lys-82 bears the N6-acetyllysine mark. Residue His-92 coordinates heme b. Cys-93 carries the S-nitrosocysteine modification. Lys-144 bears the N6-acetyllysine mark.

This sequence belongs to the globin family. Heterotetramer of two alpha chains and two beta chains. Red blood cells.

In terms of biological role, involved in oxygen transport from the lung to the various peripheral tissues. The sequence is that of Hemoglobin subunit beta (HBB) from Ursus maritimus (Polar bear).